Reading from the N-terminus, the 376-residue chain is Protein RecA (376 aa).

78–85 (GPESSGKT) is an ATP binding site. The disordered stretch occupies residues 355–376 (PVELVPNVDFDDEADTEADAED). Over residues 363–376 (DFDDEADTEADAED) the composition is skewed to acidic residues.

This sequence belongs to the RecA family.

Its subcellular location is the cytoplasm. Can catalyze the hydrolysis of ATP in the presence of single-stranded DNA, the ATP-dependent uptake of single-stranded DNA by duplex DNA, and the ATP-dependent hybridization of homologous single-stranded DNAs. It interacts with LexA causing its activation and leading to its autocatalytic cleavage. In Corynebacterium glutamicum (strain R), this protein is Protein RecA.